Here is a 295-residue protein sequence, read N- to C-terminus: Bifunctional protein FolD (295 aa).

Residues 166-168 (GRS), Ser-191, and Ile-232 each bind NADP(+).

Belongs to the tetrahydrofolate dehydrogenase/cyclohydrolase family. In terms of assembly, homodimer.

The enzyme catalyses (6R)-5,10-methylene-5,6,7,8-tetrahydrofolate + NADP(+) = (6R)-5,10-methenyltetrahydrofolate + NADPH. It catalyses the reaction (6R)-5,10-methenyltetrahydrofolate + H2O = (6R)-10-formyltetrahydrofolate + H(+). It functions in the pathway one-carbon metabolism; tetrahydrofolate interconversion. Catalyzes the oxidation of 5,10-methylenetetrahydrofolate to 5,10-methenyltetrahydrofolate and then the hydrolysis of 5,10-methenyltetrahydrofolate to 10-formyltetrahydrofolate. The sequence is that of Bifunctional protein FolD from Rhodopseudomonas palustris (strain BisA53).